The sequence spans 282 residues: Small-conductance mechanosensitive channel (282 aa).

Topologically, residues 1 to 23 (MWADIYHKLVEIYDIKAVKFLLD) are periplasmic. Residues 24–46 (VLKILIIAFIGIKFADFLIYRFY) traverse the membrane as a helical segment. Topologically, residues 47 to 66 (KLYSKSKIQLPQRKIDTLTS) are cytoplasmic. The helical transmembrane segment at 67–87 (LTKNAVRYIIYFLAGASILKL) threads the bilayer. The Periplasmic segment spans residues 88 to 89 (FN). A helical membrane pass occupies residues 90 to 110 (IDMTSLLAVAGIGSLAIGFGA). Residues 111–282 (QNLVKDMISG…TVILSEKKTN (172 aa)) are Cytoplasmic-facing.

This sequence belongs to the MscS (TC 1.A.23) family. Homoheptamer.

It is found in the cell inner membrane. Its function is as follows. Mechanosensitive ion channel that participates in the regulation of osmotic pressure changes within the cell, opening in response to stretch forces in the membrane lipid bilayer, without the need for other proteins. Has high selectivity for anions, and may contribute to resistance to hypoosmotic shock. In Caldanaerobacter subterraneus subsp. tengcongensis (strain DSM 15242 / JCM 11007 / NBRC 100824 / MB4) (Thermoanaerobacter tengcongensis), this protein is Small-conductance mechanosensitive channel.